A 306-amino-acid polypeptide reads, in one-letter code: uncharacterized protein (306 aa).

Residues 13-39 (NMLNEIAANNNLLNNKNNQTNQLNNNQ) adopt a coiled-coil conformation. 3 disordered regions span residues 44–76 (YNNQ…HQQN), 103–204 (DSKE…QSGQ), and 216–249 (QKQL…TMQH). Residues 119–201 (HQQPIQNNPS…QFAQPNQYNQ (83 aa)) are compositionally biased toward low complexity. Residues 218–235 (QLDKNQPEKIPSKPEKNQ) show a composition bias toward basic and acidic residues. The helical transmembrane segment at 279 to 299 (LFDYIIIPIALVLVFLFLVHP) threads the bilayer.

It localises to the membrane. This is an uncharacterized protein from Acanthamoeba polyphaga mimivirus (APMV).